Consider the following 434-residue polypeptide: Serine hydroxymethyltransferase (434 aa).

(6S)-5,6,7,8-tetrahydrofolate-binding positions include L133 and 137–139 (GHL). K242 is modified (N6-(pyridoxal phosphate)lysine).

This sequence belongs to the SHMT family. Homodimer. The cofactor is pyridoxal 5'-phosphate.

It is found in the cytoplasm. It carries out the reaction (6R)-5,10-methylene-5,6,7,8-tetrahydrofolate + glycine + H2O = (6S)-5,6,7,8-tetrahydrofolate + L-serine. It participates in one-carbon metabolism; tetrahydrofolate interconversion. It functions in the pathway amino-acid biosynthesis; glycine biosynthesis; glycine from L-serine: step 1/1. Catalyzes the reversible interconversion of serine and glycine with tetrahydrofolate (THF) serving as the one-carbon carrier. This reaction serves as the major source of one-carbon groups required for the biosynthesis of purines, thymidylate, methionine, and other important biomolecules. Also exhibits THF-independent aldolase activity toward beta-hydroxyamino acids, producing glycine and aldehydes, via a retro-aldol mechanism. This is Serine hydroxymethyltransferase from Hyphomicrobium methylovorum.